The following is a 957-amino-acid chain: MPLIMEDGINVDDLFGEPGSLELGLSPPSNAPIKGLPQRLDEMRLVGCCQKIAWSRLGCVAYITPDGMRVNVRHLQCRPSDGKWVLSEDTPLLPVTEAHGGHPLVHLCWNETGAELAVADSSGRVSIYSISIALNSIAGHRQATSDPDDDGAQIVGMMWLNVNRVVHAFHQAAKVQGRWAYSPFRRRPIGPFHPVNKAGLVCVTRSGTIRLLYQNPDSRWAEISTELKNTGYSDRLLTHAALVSTQGGVLVATHSACQKLCLYRVQIAWNPTQYDPGQQKPPAPWPVPSFRFLHCKVESLCDVIGTNRNPGDNQGLPSFTNSVYGLTRLDIILPALDNPAGSTSTPWIVAVYSSPLHATPDHPQQQSPASVIVRWQLDTGAVTLHPKFDEVGSKKSSAQMKPKLELRRLEDIYSDRYAISIDQIEYGNVLAITYEDGSIVFHDPKTMAVFNGVDDTNTVTSLAQAGFHYPPEASGLHMAFSPNACAAVMLDAEGQTQLRLTEHTYGAEGGLHDENKYSAAIAALTLAFCRGCGSDVNIDDVILILVRQLSSEAQINFINEVYRALSVNCNFTMEQDKLMNHIYIPRCLSLQAALGFKDKYTPRSSPSAIPWAILQLRHASVLYAFFFQYNKGAPTESHDPDVLRMVLGNTKWALEFSFYVSNELFDLADEFESMASDQEAFTQKLKSTTSLPLIILLSSMSRAFLRFICRGLRGIHAGYATAAPLTGDARVYYAEIYQTLENSPVRIDAYEKFLAGVDSAVRHAYHSAGFGDAERPGPEKELLVNARVPPVLVSAVATILRQTVPALKSEIDRITIYMGNYSWLGLAHDRRTEMYRRTRDVDIIKKIPLRSLGPYTEVDAAPSGKTNAQGPPQQPQPQQQRRRRCVRCCEISGDTHPPRSLLSFRMIAKLGLLRSCVCGGMWTLVEPEVSAPAADPPVSQATGRTPALMAIGLAGSS.

The tract at residues 855 to 883 (YTEVDAAPSGKTNAQGPPQQPQPQQQRRR) is disordered.

This sequence belongs to the Mediator complex subunit 16 family. As to quaternary structure, component of the Mediator complex.

It is found in the nucleus. In terms of biological role, component of the Mediator complex, a coactivator involved in the regulated transcription of nearly all RNA polymerase II-dependent genes. Mediator functions as a bridge to convey information from gene-specific regulatory proteins to the basal RNA polymerase II transcription machinery. Mediator is recruited to promoters by direct interactions with regulatory proteins and serves as a scaffold for the assembly of a functional preinitiation complex with RNA polymerase II and the general transcription factors. The polypeptide is Mediator of RNA polymerase II transcription subunit 16 (sin4) (Aspergillus clavatus (strain ATCC 1007 / CBS 513.65 / DSM 816 / NCTC 3887 / NRRL 1 / QM 1276 / 107)).